We begin with the raw amino-acid sequence, 714 residues long: Forkhead box protein P2 (714 aa).

Over residues 1-28 (MMQESATETISNSSMNQNGMSTLSSQLD) the composition is skewed to polar residues. 2 disordered regions span residues 1 to 45 (MMQE…SEVS) and 280 to 338 (DNGI…TGAS). Over residues 291–304 (TTNNSSSTTSSTTS) the composition is skewed to low complexity. Residues 314 to 323 (SIVNGQSSVL) are compositionally biased toward polar residues. The span at 325–336 (ARRDSSSHEETG) shows a compositional bias: basic and acidic residues. The C2H2-type zinc finger occupies 345–370 (GVCKWPGCESICEDFGQFLKHLNNEH). Positions 387-408 (VQQLEIQLSKERERLQAMMTHL) are leucine-zipper. Positions 421 to 425 (PLNLV) are CTBP1-binding. Low complexity predominate over residues 437–458 (TSPQSLPQTPTTPTAPVTPITQ). The disordered stretch occupies residues 437–464 (TSPQSLPQTPTTPTAPVTPITQGPSVIT). The segment at residues 503–593 (RPPFTYATLI…SQKITGSPTL (91 aa)) is a DNA-binding region (fork-head). Disordered stretches follow at residues 648–667 (LDHI…QPHI) and 677–714 (VIAE…EDLE). Positions 698-714 (LEDDREIEEEPLSEDLE) are enriched in acidic residues.

Forms homodimers and heterodimers with FOXP1 and FOXP4. Dimerization is required for DNA-binding. Interacts with CTBP1. Interacts with FOXP1. Interacts with TBR1. Interacts with ZMYM2. Highest expression in lung. Lower expression in spleen, skeletal muscle, brain, kidney and small intestine.

The protein localises to the nucleus. Its function is as follows. Transcriptional repressor that may play a role in the specification and differentiation of lung epithelium. May also play a role in developing neural, gastrointestinal and cardiovascular tissues. Can act with CTBP1 to synergistically repress transcription but CTPBP1 is not essential. Plays a role in synapse formation by regulating SRPX2 levels. The polypeptide is Forkhead box protein P2 (Foxp2) (Mus musculus (Mouse)).